Reading from the N-terminus, the 500-residue chain is MTTDQHQEILRTEGLSKFFPGVKALDNVDFSLRRGEIMALLGENGAGKSTLIKALTGVYHADRGTIWLEGQAISPKNTAHAQQLGIGTVYQEVNLLPNMSVADNLFIGREPKRFGLLRRKEMEKRATELMASYGFSLDVREPLNRFSVAMQQIVAICRAIDLSAKVLILDEPTASLDTQEVELLFDLMRQLRDRGVSLIFVTHFLDQVYQVSDRITVLRNGSFVGCRETCELPQIELVKMMLGRELDTHALQRAGRTLLSDKPVAAFKNYGKKGTIAPFDLEVRPGEIVGLAGLLGSGRTETAEVIFGIKPADSGTALIKGKPQNLRSPHQASVLGIGFCPEDRKTDGIIAAASVRENIILALQAQRGWLRPISRKEQQEIAERFIRQLGIRTPSTEQPIEFLSGGNQQKVLLSRWLLTRPQFLILDEPTRGIDVGAHAEIIRLIETLCADGLALLVISSELEELVGYADRVIIMRDRKQVAEIPLAELSVPAIMNAIAA.

ABC transporter domains lie at 10 to 245 and 259 to 497; these read LRTE…LGRE and LSDK…IMNA. 42–49 serves as a coordination point for ATP; it reads GENGAGKS.

Belongs to the ABC transporter superfamily. As to quaternary structure, the complex is composed of two ATP-binding proteins (YtfR), two transmembrane proteins (YtfT and YjfF) and a solute-binding protein (YtfQ).

Its subcellular location is the cell inner membrane. It catalyses the reaction D-galactofuranose(out) + ATP + H2O = D-galactofuranose(in) + ADP + phosphate + H(+). Part of the ABC transporter complex YtfQRT-YjfF involved in galactofuranose transport. Responsible for energy coupling to the transport system. This chain is Galactofuranose transporter ATP-binding protein YtfR (ytfR), found in Escherichia coli (strain K12).